Consider the following 129-residue polypeptide: Large ribosomal subunit protein uL22 (129 aa).

This sequence belongs to the universal ribosomal protein uL22 family. In terms of assembly, part of the 50S ribosomal subunit.

This protein binds specifically to 23S rRNA; its binding is stimulated by other ribosomal proteins, e.g. L4, L17, and L20. It is important during the early stages of 50S assembly. It makes multiple contacts with different domains of the 23S rRNA in the assembled 50S subunit and ribosome. Functionally, the globular domain of the protein is located near the polypeptide exit tunnel on the outside of the subunit, while an extended beta-hairpin is found that lines the wall of the exit tunnel in the center of the 70S ribosome. This is Large ribosomal subunit protein uL22 from Metamycoplasma hominis (strain ATCC 23114 / DSM 25592 / NBRC 14850 / NCTC 10111 / PG21) (Mycoplasma hominis).